Here is a 251-residue protein sequence, read N- to C-terminus: GTP cyclohydrolase 1 type 2 homolog (251 aa).

A divalent metal cation is bound by residues His63, His64, Asp101, His219, and Glu223.

It belongs to the GTP cyclohydrolase I type 2/NIF3 family. Homohexamer.

This Pasteurella multocida (strain Pm70) protein is GTP cyclohydrolase 1 type 2 homolog.